Consider the following 514-residue polypeptide: 2-isopropylmalate synthase (514 aa).

The 264-residue stretch at 5-268 (LIIFDTTLRD…DVGLDTTQIV (264 aa)) folds into the Pyruvate carboxyltransferase domain. Residues D14, H202, H204, and N239 each coordinate Mn(2+). The regulatory domain stretch occupies residues 395–514 (KFVSLSQRSE…KDDKLNPQRS (120 aa)).

It belongs to the alpha-IPM synthase/homocitrate synthase family. LeuA type 1 subfamily. In terms of assembly, homodimer. It depends on Mn(2+) as a cofactor.

It is found in the cytoplasm. It carries out the reaction 3-methyl-2-oxobutanoate + acetyl-CoA + H2O = (2S)-2-isopropylmalate + CoA + H(+). Its pathway is amino-acid biosynthesis; L-leucine biosynthesis; L-leucine from 3-methyl-2-oxobutanoate: step 1/4. Catalyzes the condensation of the acetyl group of acetyl-CoA with 3-methyl-2-oxobutanoate (2-ketoisovalerate) to form 3-carboxy-3-hydroxy-4-methylpentanoate (2-isopropylmalate). In Burkholderia ambifaria (strain ATCC BAA-244 / DSM 16087 / CCUG 44356 / LMG 19182 / AMMD) (Burkholderia cepacia (strain AMMD)), this protein is 2-isopropylmalate synthase.